The chain runs to 125 residues: Cytochrome c' (125 aa).

Residues R10, E67, C116, C119, and H120 each coordinate heme c.

As to quaternary structure, homodimer. Post-translationally, binds 1 heme c group covalently per subunit.

Its function is as follows. Cytochrome c' is the most widely occurring bacterial c-type cytochrome. Cytochromes c' are high-spin proteins and the heme has no sixth ligand. Their exact function is not known. The sequence is that of Cytochrome c' from Pararhodospirillum photometricum (Rhodospirillum photometricum).